The chain runs to 72 residues: Translation initiation factor IF-1 (72 aa).

The S1-like domain occupies 1 to 72 (MAKEDSIEMQ…TKGRIVFRAR (72 aa)).

The protein belongs to the IF-1 family. Component of the 30S ribosomal translation pre-initiation complex which assembles on the 30S ribosome in the order IF-2 and IF-3, IF-1 and N-formylmethionyl-tRNA(fMet); mRNA recruitment can occur at any time during PIC assembly.

It is found in the cytoplasm. In terms of biological role, one of the essential components for the initiation of protein synthesis. Stabilizes the binding of IF-2 and IF-3 on the 30S subunit to which N-formylmethionyl-tRNA(fMet) subsequently binds. Helps modulate mRNA selection, yielding the 30S pre-initiation complex (PIC). Upon addition of the 50S ribosomal subunit IF-1, IF-2 and IF-3 are released leaving the mature 70S translation initiation complex. The protein is Translation initiation factor IF-1 of Shewanella amazonensis (strain ATCC BAA-1098 / SB2B).